We begin with the raw amino-acid sequence, 155 residues long: Aspartate carbamoyltransferase regulatory chain (155 aa).

Cys-110, Cys-115, Cys-139, and Cys-142 together coordinate Zn(2+).

The protein belongs to the PyrI family. Contains catalytic and regulatory chains. Zn(2+) is required as a cofactor.

Its function is as follows. Involved in allosteric regulation of aspartate carbamoyltransferase. In Yersinia pestis bv. Antiqua (strain Antiqua), this protein is Aspartate carbamoyltransferase regulatory chain.